A 156-amino-acid chain; its full sequence is Small ribosomal subunit protein eS19A (156 aa).

It belongs to the eukaryotic ribosomal protein eS19 family.

The chain is Small ribosomal subunit protein eS19A (RpS19a) from Drosophila melanogaster (Fruit fly).